The chain runs to 223 residues: MMHEKLKKAVGWAALEYVSSGMIIGVGTGSTTDHFIDALGTVKHKIEGVVSSSEQSTTKLKSMGILLFNLNDVDGLDIYVDGTDEINSNMQMIKGGGAALTREKVLAAAANKFICIADTSKQVDILGNFPLPIEVIPMAHAWVARELVHLTGGLPKYRQGVITDNGNIILDIYNLKILDAIALEKIINNIPGVVTVGLFANRCADIALISSDLGIEEISRSIK.

Substrate is bound by residues threonine 28–threonine 31, aspartate 81–aspartate 84, and lysine 94–glycine 97. The Proton acceptor role is filled by glutamate 103. Residue lysine 121 participates in substrate binding.

Belongs to the ribose 5-phosphate isomerase family. Homodimer.

The enzyme catalyses aldehydo-D-ribose 5-phosphate = D-ribulose 5-phosphate. It functions in the pathway carbohydrate degradation; pentose phosphate pathway; D-ribose 5-phosphate from D-ribulose 5-phosphate (non-oxidative stage): step 1/1. Catalyzes the reversible conversion of ribose-5-phosphate to ribulose 5-phosphate. The sequence is that of Ribose-5-phosphate isomerase A from Baumannia cicadellinicola subsp. Homalodisca coagulata.